The chain runs to 451 residues: Protein-tyrosine kinase 6 (451 aa).

Positions 8–72 constitute an SH3 domain; the sequence is HLGPKYVGLW…PHNYLAERET (65 aa). 4 positions are modified to phosphotyrosine; by autocatalysis: Y13, Y61, Y66, and Y114. Residues 78–170 enclose the SH2 domain; that stretch reads WFFGCISRSE…SHGLRLAAPC (93 aa). The linker stretch occupies residues 171-190; sequence RKHEPEPLPHWDDWERPREE. The 255-residue stretch at 191 to 445 folds into the Protein kinase domain; the sequence is FTLCRKLGSG…ALRERLSSFT (255 aa). Residues 197-205 and K219 each bind ATP; that span reads LGSGYFGEV. Catalysis depends on D312, which acts as the Proton acceptor. Phosphotyrosine; by autocatalysis is present on residues Y342 and Y351. Y447 carries the post-translational modification Phosphotyrosine.

Belongs to the protein kinase superfamily. Tyr protein kinase family. BRK/PTK6/SIK subfamily. Interacts with GAP-A.p65. Interacts (via SH3 and SH2 domains) with KHDRBS1. Interacts (via SH3 and SH2 domains) with phosphorylated IRS4. Interacts with ADAM15. Interacts (via SH3 domain) with SFPQ. Interacts with EGFR and ERBB2. Interacts with STAP2. Interacts with PNX. Interacts with SFPQ. Interacts with PTK/ATK. Interacts with CTNNB1. Autophosphorylated. Autophosphorylation of Tyr-342 leads to an increase of kinase activity. Tyr-447 binds to the SH2 domain when phosphorylated and negatively regulates kinase activity. In terms of tissue distribution, epithelia-specific. Very high level in colon and high levels in small intestine and prostate, and low levels in some fetal tissues. Not expressed in breast or ovarian tissue but expressed in high percentage of breast and ovarian cancers. Also overexpressed in some metastatic melanomas, lymphomas, colon cancers, squamous cell carcinomas and prostate cancers. Also found in melanocytes. Not expressed in heart, brain, placenta, lung, liver, skeletal muscle, kidney and pancreas. Isoform 2 is present in prostate epithelial cell lines derived from normal prostate and prostate adenocarcinomas, as well as in a variety of cell lines.

The protein localises to the cytoplasm. It localises to the nucleus. Its subcellular location is the cell projection. It is found in the ruffle. The protein resides in the membrane. It catalyses the reaction L-tyrosyl-[protein] + ATP = O-phospho-L-tyrosyl-[protein] + ADP + H(+). With respect to regulation, activated by EGF, NRG1 and IGF1. Inhibited by SOCS3 to phosphorylate STAT3. Stabilized in the inactive form by an association between the SH3 domain and the SH2-TK linker region. Interaction between Trp-184 within SH2-TK linker region and the catalytic domain appears essential for positive regulation of kinase activity. Functionally, non-receptor tyrosine-protein kinase implicated in the regulation of a variety of signaling pathways that control the differentiation and maintenance of normal epithelia, as well as tumor growth. Function seems to be context dependent and differ depending on cell type, as well as its intracellular localization. A number of potential nuclear and cytoplasmic substrates have been identified. These include the RNA-binding proteins: KHDRBS1/SAM68, KHDRBS2/SLM1, KHDRBS3/SLM2 and SFPQ/PSF; transcription factors: STAT3 and STAT5A/B and a variety of signaling molecules: ARHGAP35/p190RhoGAP, PXN/paxillin, BTK/ATK, STAP2/BKS. Phosphorylates the GTPase-activating protein ARAP1 following EGF stimulation which enhances EGFR signaling by delaying EGFR down-regulation. Also associates with a variety of proteins that are likely upstream of PTK6 in various signaling pathways, or for which PTK6 may play an adapter-like role. These proteins include ADAM15, EGFR, ERBB2, ERBB3 and IRS4. In normal or non-tumorigenic tissues, PTK6 promotes cellular differentiation and apoptosis. In tumors PTK6 contributes to cancer progression by sensitizing cells to mitogenic signals and enhancing proliferation, anchorage-independent survival and migration/invasion. Association with EGFR, ERBB2, ERBB3 may contribute to mammary tumor development and growth through enhancement of EGF-induced signaling via BTK/AKT and PI3 kinase. Contributes to migration and proliferation by contributing to EGF-mediated phosphorylation of ARHGAP35/p190RhoGAP, which promotes association with RASA1/p120RasGAP, inactivating RhoA while activating RAS. EGF stimulation resulted in phosphorylation of PNX/Paxillin by PTK6 and activation of RAC1 via CRK/CrKII, thereby promoting migration and invasion. PTK6 activates STAT3 and STAT5B to promote proliferation. Nuclear PTK6 may be important for regulating growth in normal epithelia, while cytoplasmic PTK6 might activate oncogenic signaling pathways. In terms of biological role, inhibits PTK6 phosphorylation and PTK6 association with other tyrosine-phosphorylated proteins. In Homo sapiens (Human), this protein is Protein-tyrosine kinase 6 (PTK6).